The following is a 254-amino-acid chain: Imidazole glycerol phosphate synthase subunit HisF (254 aa).

Residues aspartate 12 and aspartate 131 contribute to the active site.

Belongs to the HisA/HisF family. Heterodimer of HisH and HisF.

Its subcellular location is the cytoplasm. The enzyme catalyses 5-[(5-phospho-1-deoxy-D-ribulos-1-ylimino)methylamino]-1-(5-phospho-beta-D-ribosyl)imidazole-4-carboxamide + L-glutamine = D-erythro-1-(imidazol-4-yl)glycerol 3-phosphate + 5-amino-1-(5-phospho-beta-D-ribosyl)imidazole-4-carboxamide + L-glutamate + H(+). Its pathway is amino-acid biosynthesis; L-histidine biosynthesis; L-histidine from 5-phospho-alpha-D-ribose 1-diphosphate: step 5/9. Functionally, IGPS catalyzes the conversion of PRFAR and glutamine to IGP, AICAR and glutamate. The HisF subunit catalyzes the cyclization activity that produces IGP and AICAR from PRFAR using the ammonia provided by the HisH subunit. This Leifsonia xyli subsp. xyli (strain CTCB07) protein is Imidazole glycerol phosphate synthase subunit HisF.